Here is a 531-residue protein sequence, read N- to C-terminus: Flavin-containing monooxygenase 3 (531 aa).

FAD is bound by residues glycine 9 to serine 13, glutamate 32, leucine 40 to tryptophan 41, and asparagine 61 to serine 62. NADP(+) contacts are provided by residues threonine 60–asparagine 61 and serine 195–aspartate 198. Position 401 is a phosphoserine (serine 401). The chain crosses the membrane as a helical span at residues tyrosine 511–isoleucine 531.

This sequence belongs to the FMO family. FAD serves as cofactor. As to expression, detected in liver and kidney (at protein level). Expressed in kidney and liver. Weakly expressed in lung. Does not seem to be expressed in brain, adipose tissue, or muscle.

The protein resides in the microsome membrane. The protein localises to the endoplasmic reticulum membrane. The enzyme catalyses trimethylamine + NADPH + O2 = trimethylamine N-oxide + NADP(+) + H2O. It catalyses the reaction N,N-dimethylaniline + NADPH + O2 + H(+) = N,N-dimethylaniline N-oxide + NADP(+) + H2O. The catalysed reaction is hypotaurine + NADPH + O2 + H(+) = taurine + NADP(+) + H2O. It carries out the reaction (S)-nicotine + NADPH + O2 = trans-(S)-nicotine N(1')-oxide + NADP(+) + H2O. The enzyme catalyses albendazole + NADPH + O2 + H(+) = albendazole S-oxide + NADP(+) + H2O. Essential hepatic enzyme that catalyzes the oxygenation of a wide variety of nitrogen- and sulfur-containing compounds including drugs as well as dietary compounds. Plays an important role in the metabolism of trimethylamine (TMA), via the production of trimethylamine N-oxide (TMAO) metabolite. TMA is generated by the action of gut microbiota using dietary precursors such as choline, choline containing compounds, betaine or L-carnitine. By regulating TMAO concentration, FMO3 directly impacts both platelet responsiveness and rate of thrombus formation. This Rattus norvegicus (Rat) protein is Flavin-containing monooxygenase 3 (Fmo3).